A 94-amino-acid polypeptide reads, in one-letter code: Selenoprotein K (94 aa).

A helical membrane pass occupies residues 20 to 42; the sequence is LSLITDFFWGIAEFVVLFFKTLL. The interval 47 to 94 is disordered; it reads KKGRGYRNSSDSRYDDGRGPPGNPPRRMGRISHLHGPSPPPMAGGUGR. Position 92 (Sec-92) is a non-standard amino acid, selenocysteine.

The protein belongs to the selenoprotein K family. In terms of assembly, interacts with DERL1, DERL2, DERL3 and SELENOS. The SELENOK-SELENOS complex interacts with VCP. Interacts with ZDHHC6. Cleaved by CAPN2/m-calpain in resting macrophages but not in activated macrophages. Macrophage activation up-regulates expression of the calpain inhibitor CAST/calpastatin, resulting in inhibition of CAPN2 activity. Post-translationally, truncated SELENOK proteins produced by failed UGA/Sec decoding are ubiquitinated by the CRL2(KLHDC2) complex, which recognizes the diglycine (Gly-Gly) at the C-terminus of truncated SELENOK proteins.

It localises to the endoplasmic reticulum membrane. The protein resides in the cell membrane. Required for Ca(2+) flux in immune cells and plays a role in T-cell proliferation and in T-cell and neutrophil migration. Involved in endoplasmic reticulum-associated degradation (ERAD) of soluble glycosylated proteins. Required for palmitoylation and cell surface expression of CD36 and involved in macrophage uptake of low-density lipoprotein and in foam cell formation. Together with ZDHHC6, required for palmitoylation of ITPR1 in immune cells, leading to regulate ITPR1 stability and function. Plays a role in protection of cells from ER stress-induced apoptosis. Protects cells from oxidative stress when overexpressed in cardiomyocytes. The chain is Selenoprotein K from Chinchilla lanigera (Long-tailed chinchilla).